Reading from the N-terminus, the 656-residue chain is tRNA(Met) cytidine acetyltransferase TmcA (656 aa).

ATP is bound by residues Q145, 167-176, and R291; that span reads GRGKSALLGM. Positions 368-542 constitute an N-acetyltransferase domain; sequence SEGKYNRQFF…SGCYSAIALK (175 aa). Residues 474 to 476, 481 to 487, and E510 contribute to the acetyl-CoA site; these read IAV and QQKGIGQ.

Belongs to the RNA cytidine acetyltransferase family. TmcA subfamily.

The protein resides in the cytoplasm. The catalysed reaction is cytidine(34) in elongator tRNA(Met) + acetyl-CoA + ATP + H2O = N(4)-acetylcytidine(34) in elongator tRNA(Met) + ADP + phosphate + CoA + H(+). Catalyzes the formation of N(4)-acetylcytidine (ac(4)C) at the wobble position of tRNA(Met), by using acetyl-CoA as an acetyl donor and ATP (or GTP). This Haemophilus influenzae (strain ATCC 51907 / DSM 11121 / KW20 / Rd) protein is tRNA(Met) cytidine acetyltransferase TmcA.